Here is a 221-residue protein sequence, read N- to C-terminus: 7-cyano-7-deazaguanine synthase (221 aa).

9-19 (YSGGMDSFTLL) is an ATP binding site. Zn(2+) contacts are provided by cysteine 185, cysteine 193, cysteine 196, and cysteine 199.

It belongs to the QueC family. The cofactor is Zn(2+).

The catalysed reaction is 7-carboxy-7-deazaguanine + NH4(+) + ATP = 7-cyano-7-deazaguanine + ADP + phosphate + H2O + H(+). Its pathway is purine metabolism; 7-cyano-7-deazaguanine biosynthesis. Its function is as follows. Catalyzes the ATP-dependent conversion of 7-carboxy-7-deazaguanine (CDG) to 7-cyano-7-deazaguanine (preQ(0)). This chain is 7-cyano-7-deazaguanine synthase, found in Marinobacter nauticus (strain ATCC 700491 / DSM 11845 / VT8) (Marinobacter aquaeolei).